Here is a 59-residue protein sequence, read N- to C-terminus: UPF0434 protein RHOS4_00640 (59 aa).

Belongs to the UPF0434 family.

This is UPF0434 protein RHOS4_00640 from Cereibacter sphaeroides (strain ATCC 17023 / DSM 158 / JCM 6121 / CCUG 31486 / LMG 2827 / NBRC 12203 / NCIMB 8253 / ATH 2.4.1.) (Rhodobacter sphaeroides).